We begin with the raw amino-acid sequence, 80 residues long: UPF0291 protein EF_1580 (80 aa).

The segment at 60–80 (TDVTPEKLKKIQREKGLHNRK) is disordered. Positions 63 to 80 (TPEKLKKIQREKGLHNRK) are enriched in basic and acidic residues.

This sequence belongs to the UPF0291 family.

The protein localises to the cytoplasm. The polypeptide is UPF0291 protein EF_1580 (Enterococcus faecalis (strain ATCC 700802 / V583)).